Here is a 364-residue protein sequence, read N- to C-terminus: Dermonecrotic toxin SPH (364 aa).

The N-terminal stretch at 1-17 (MIRIFALITALAITVKC) is a signal peptide. The Nucleophile role is filled by histidine 29. Mg(2+)-binding residues include glutamate 49 and aspartate 51. Histidine 65 is a catalytic residue. Intrachain disulfides connect cysteine 69–cysteine 75 and cysteine 71–cysteine 215. Aspartate 109 is a Mg(2+) binding site.

The protein belongs to the arthropod phospholipase D family. The cofactor is Mg(2+). In terms of tissue distribution, expressed in salivary glands.

The protein resides in the secreted. The catalysed reaction is an N-(acyl)-sphingosylphosphocholine = an N-(acyl)-sphingosyl-1,3-cyclic phosphate + choline. It carries out the reaction an N-(acyl)-sphingosylphosphoethanolamine = an N-(acyl)-sphingosyl-1,3-cyclic phosphate + ethanolamine. The enzyme catalyses a 1-acyl-sn-glycero-3-phosphocholine = a 1-acyl-sn-glycero-2,3-cyclic phosphate + choline. It catalyses the reaction a 1-acyl-sn-glycero-3-phosphoethanolamine = a 1-acyl-sn-glycero-2,3-cyclic phosphate + ethanolamine. In terms of biological role, dermonecrotic toxins cleave the phosphodiester linkage between the phosphate and headgroup of certain phospholipids (sphingolipid and lysolipid substrates), forming an alcohol (often choline) and a cyclic phosphate. Acts on sphingomyelin (SM). It may also act on ceramide phosphoethanolamine (CPE), lysophosphatidylcholine (LPC) and lysophosphatidylethanolamine (LPE), but not on lysophosphatidylserine (LPS), and lysophosphatidylglycerol (LPG). It acts by transphosphatidylation, releasing exclusively cyclic phosphate products as second products. Induces dermonecrosis, hemolysis, increased vascular permeability, edema, inflammatory response, and platelet aggregation. This is Dermonecrotic toxin SPH (SPH) from Ixodes scapularis (Black-legged tick).